Consider the following 350-residue polypeptide: tRNA dimethylallyltransferase (350 aa).

34–41 (GPTASGKT) is a binding site for ATP. Residue 36–41 (TASGKT) participates in substrate binding. Interaction with substrate tRNA regions lie at residues 63–66 (DSAL), 187–191 (QRIQR), and 274–279 (RCVGYR).

Belongs to the IPP transferase family. As to quaternary structure, monomer. Mg(2+) is required as a cofactor.

It catalyses the reaction adenosine(37) in tRNA + dimethylallyl diphosphate = N(6)-dimethylallyladenosine(37) in tRNA + diphosphate. Catalyzes the transfer of a dimethylallyl group onto the adenine at position 37 in tRNAs that read codons beginning with uridine, leading to the formation of N6-(dimethylallyl)adenosine (i(6)A). This is tRNA dimethylallyltransferase from Paracidovorax citrulli (strain AAC00-1) (Acidovorax citrulli).